The chain runs to 652 residues: 2',3'-cyclic-nucleotide 2'-phosphodiesterase/3'-nucleotidase (652 aa).

Residues 1–24 (MFKRPLTLSLLASLIALTTSTAQA) form the signal peptide. The a divalent metal cation site is built by Asp-36, His-38, Asp-81, Asn-121, His-230, His-262, and His-264. Substrate is bound by residues Tyr-445 and 549–555 (YRAYSGK).

This sequence belongs to the 5'-nucleotidase family. It depends on a divalent metal cation as a cofactor.

It localises to the periplasm. It carries out the reaction a nucleoside 2',3'-cyclic phosphate + H2O = a nucleoside 3'-phosphate + H(+). The enzyme catalyses a ribonucleoside 3'-phosphate + H2O = a ribonucleoside + phosphate. In terms of biological role, this bifunctional enzyme catalyzes two consecutive reactions during ribonucleic acid degradation. Converts a 2',3'-cyclic nucleotide to a 3'-nucleotide and then the 3'-nucleotide to the corresponding nucleoside and phosphate. This is 2',3'-cyclic-nucleotide 2'-phosphodiesterase/3'-nucleotidase (cpdB) from Yersinia enterocolitica.